The primary structure comprises 376 residues: Succinyl-diaminopimelate desuccinylase (376 aa).

H67 contacts Zn(2+). Residue D69 is part of the active site. D100 lines the Zn(2+) pocket. The active-site Proton acceptor is E134. Zn(2+) contacts are provided by E135, E163, and H349.

This sequence belongs to the peptidase M20A family. DapE subfamily. Homodimer. Zn(2+) serves as cofactor. The cofactor is Co(2+).

The catalysed reaction is N-succinyl-(2S,6S)-2,6-diaminopimelate + H2O = (2S,6S)-2,6-diaminopimelate + succinate. It participates in amino-acid biosynthesis; L-lysine biosynthesis via DAP pathway; LL-2,6-diaminopimelate from (S)-tetrahydrodipicolinate (succinylase route): step 3/3. Catalyzes the hydrolysis of N-succinyl-L,L-diaminopimelic acid (SDAP), forming succinate and LL-2,6-diaminopimelate (DAP), an intermediate involved in the bacterial biosynthesis of lysine and meso-diaminopimelic acid, an essential component of bacterial cell walls. The chain is Succinyl-diaminopimelate desuccinylase from Xanthomonas campestris pv. campestris (strain B100).